We begin with the raw amino-acid sequence, 549 residues long: CTP synthase (549 aa).

The tract at residues Met-1 to Leu-272 is amidoligase domain. Residue Ser-19 coordinates CTP. Ser-19 is a UTP binding site. ATP is bound by residues Ser-20 to Leu-25 and Asp-77. Positions 77 and 146 each coordinate Mg(2+). CTP contacts are provided by residues Asp-153 to Glu-155, Lys-193 to Gln-198, and Lys-229. UTP contacts are provided by residues Lys-193–Gln-198 and Lys-229. One can recognise a Glutamine amidotransferase type-1 domain in the interval Val-301–Ser-548. Position 360 (Gly-360) interacts with L-glutamine. Cys-387 functions as the Nucleophile; for glutamine hydrolysis in the catalytic mechanism. L-glutamine is bound by residues Leu-388–Gln-391, Glu-411, and Arg-473. Active-site residues include His-521 and Glu-523.

This sequence belongs to the CTP synthase family. As to quaternary structure, homotetramer.

It catalyses the reaction UTP + L-glutamine + ATP + H2O = CTP + L-glutamate + ADP + phosphate + 2 H(+). It carries out the reaction L-glutamine + H2O = L-glutamate + NH4(+). The enzyme catalyses UTP + NH4(+) + ATP = CTP + ADP + phosphate + 2 H(+). It functions in the pathway pyrimidine metabolism; CTP biosynthesis via de novo pathway; CTP from UDP: step 2/2. Allosterically activated by GTP, when glutamine is the substrate; GTP has no effect on the reaction when ammonia is the substrate. The allosteric effector GTP functions by stabilizing the protein conformation that binds the tetrahedral intermediate(s) formed during glutamine hydrolysis. Inhibited by the product CTP, via allosteric rather than competitive inhibition. Its function is as follows. Catalyzes the ATP-dependent amination of UTP to CTP with either L-glutamine or ammonia as the source of nitrogen. Regulates intracellular CTP levels through interactions with the four ribonucleotide triphosphates. The chain is CTP synthase from Streptomyces coelicolor (strain ATCC BAA-471 / A3(2) / M145).